Here is a 421-residue protein sequence, read N- to C-terminus: uncharacterized protein (421 aa).

An N6-(pyridoxal phosphate)lysine modification is found at Lys249.

Belongs to the class-I pyridoxal-phosphate-dependent aminotransferase family. The cofactor is pyridoxal 5'-phosphate.

The protein localises to the cytoplasm. This is an uncharacterized protein from Schizosaccharomyces pombe (strain 972 / ATCC 24843) (Fission yeast).